The chain runs to 542 residues: Chromatin structure-remodeling complex subunit rsc4 (542 aa).

One can recognise a Bromo 1 domain in the interval 6–116 (HNAPFDKTKF…NTANSLESKD (111 aa)). 2 disordered regions span residues 114–139 (SKDG…KPGT) and 246–327 (ISSF…PIPE). Acidic residues predominate over residues 119-128 (LNEEENEEME). The Bromo 2 domain occupies 139 to 249 (TNEIDVPKVI…QLSSSLISSF (111 aa)). Residues 252–266 (QPKEHSPATSKHEPE) show a composition bias toward basic and acidic residues. 4 positions are modified to phosphoserine: serine 257, serine 271, serine 287, and serine 313. Residues 268–280 (TPASPTPSVSAST) show a composition bias toward low complexity. Residues 286–298 (TSVAPSFITSDQA) show a composition bias toward polar residues. The segment covering 304–322 (LKSEEAHVESFSKESEKDQ) has biased composition (basic and acidic residues).

Component of the RSC complex composed of at least arp9, arp42, rsc1, rsc4, rsc7, rsc9, rsc58, sfh1, snf21, ssr1, ssr2, ssr3 and ssr4. The complex interacts with histone and histone variant components of centromeric chromatin.

The protein resides in the nucleus. Functionally, component of the chromatin structure remodeling complex (RSC), which is involved in transcription regulation and nucleosome positioning. Controls particularly membrane and organelle development genes. The chain is Chromatin structure-remodeling complex subunit rsc4 (rsc4) from Schizosaccharomyces pombe (strain 972 / ATCC 24843) (Fission yeast).